Here is a 90-residue protein sequence, read N- to C-terminus: Protein P18 (90 aa).

A run of 3 helical transmembrane segments spans residues 1-21 (MPFG…RDTL), 37-57 (GFGY…IKPI), and 60-80 (PVNA…RGAI).

Its subcellular location is the virion membrane. In terms of biological role, component of the phage injection machinery. Required for DNA injection in the membrane transformation event. Involved in the formation of the membrane tail tube to connect the virus interior with the host cytosol. Essential for viral infectivity. The chain is Protein P18 (XVIII) from Acinetobacter calcoaceticus (Arthrobacter siderocapsulatus).